The primary structure comprises 318 residues: Transaldolase (318 aa).

The active-site Schiff-base intermediate with substrate is the lysine 132.

It belongs to the transaldolase family. Type 1 subfamily. As to quaternary structure, homodimer.

It is found in the cytoplasm. The catalysed reaction is D-sedoheptulose 7-phosphate + D-glyceraldehyde 3-phosphate = D-erythrose 4-phosphate + beta-D-fructose 6-phosphate. It participates in carbohydrate degradation; pentose phosphate pathway; D-glyceraldehyde 3-phosphate and beta-D-fructose 6-phosphate from D-ribose 5-phosphate and D-xylulose 5-phosphate (non-oxidative stage): step 2/3. Transaldolase is important for the balance of metabolites in the pentose-phosphate pathway. The polypeptide is Transaldolase (Allorhizobium ampelinum (strain ATCC BAA-846 / DSM 112012 / S4) (Agrobacterium vitis (strain S4))).